The following is a 261-amino-acid chain: RNA-binding protein 1 (261 aa).

Disordered regions lie at residues 1-38 and 232-261; these read MADG…SGNE and QFSR…RGRR. Residues 151-236 enclose the RRM domain; that stretch reads PTLYIEGLPS…SHLRLQFSRY (86 aa). A compositionally biased stretch (gly residues) spans 240-254; that stretch reads RSGGGPRSSGPPRGG.

In terms of tissue distribution, ubiquitous.

Its subcellular location is the nucleus speckle. It localises to the cytoplasmic granule. RNA-binding protein interacting with the enod40 RNA. This chain is RNA-binding protein 1, found in Medicago truncatula (Barrel medic).